Consider the following 142-residue polypeptide: Large ribosomal subunit protein bL17 (142 aa).

Belongs to the bacterial ribosomal protein bL17 family. Part of the 50S ribosomal subunit. Contacts protein L32.

This Brucella abortus (strain S19) protein is Large ribosomal subunit protein bL17.